The chain runs to 498 residues: MRTIRAATEHLFGLGWKFWRLGICKAVVPLQAAWKAFSQPVPASCNELLTQLLLCVSLASLIAGLAHHWLVSLQLYPLGPPALVTSLCGLFVFLSLGLVPPIRCLFVLSVPTLGSKQGRRLLLSYSAANLAVAVVPNVLGNVRAAGQVLSCVTEGSLESLLNTTYQLRQAARELGPASRAGSRSLTFEVEGKGSAFRLHMHTITQEILEDFSGLEFLARAALGTQRVVTGLFLLGLLGESAWYLHRYLTDLRFDNIYATRQLVRQLAQAGATHLLTSPPPWLLQTAQPKLSREELLSCLLRLGLLALLLVATAVTVASDYGAFLLAQAAVAWAQKLPTVPITLTVKYDASYKVLDFILFVLNQPPVESVFASMQRSFQWELRFTPHDCHLPQAQPPRVTAALAAGALQLLAGATLVLQAYAWRLRHTIAASFFPDQEARRLSHLQARLQRRHNQSDHLNKQPGTMATRESRKPGQGTRTLESQGPQAHDSLGPPYDLE.

At 1-51 (MRTIRAATEHLFGLGWKFWRLGICKAVVPLQAAWKAFSQPVPASCNELLTQ) the chain is on the cytoplasmic side. A helical transmembrane segment spans residues 52–72 (LLLCVSLASLIAGLAHHWLVS). The Extracellular portion of the chain corresponds to 73–81 (LQLYPLGPP). A helical transmembrane segment spans residues 82 to 102 (ALVTSLCGLFVFLSLGLVPPI). The Cytoplasmic segment spans residues 103–121 (RCLFVLSVPTLGSKQGRRL). The chain crosses the membrane as a helical span at residues 122-142 (LLSYSAANLAVAVVPNVLGNV). Topologically, residues 143 to 226 (RAAGQVLSCV…LARAALGTQR (84 aa)) are extracellular. Residues 227 to 247 (VVTGLFLLGLLGESAWYLHRY) traverse the membrane as a helical segment. At 248–303 (LTDLRFDNIYATRQLVRQLAQAGATHLLTSPPPWLLQTAQPKLSREELLSCLLRLG) the chain is on the cytoplasmic side. Residues 304–324 (LLALLLVATAVTVASDYGAFL) traverse the membrane as a helical segment. The Extracellular segment spans residues 325-401 (LAQAAVAWAQ…QAQPPRVTAA (77 aa)). The helical transmembrane segment at 402–422 (LAAGALQLLAGATLVLQAYAW) threads the bilayer. Topologically, residues 423 to 498 (RLRHTIAASF…DSLGPPYDLE (76 aa)) are cytoplasmic. Residues 449-498 (QRRHNQSDHLNKQPGTMATRESRKPGQGTRTLESQGPQAHDSLGPPYDLE) are disordered. The span at 476–485 (GTRTLESQGP) shows a compositional bias: polar residues.

As to expression, expressed in osteoclast (at protein level). Ubiquitous. Highly expressed in multi-nuclear osteoclast cells compared to mono-nuclear macrophages. Expressed in foreign body giant cells (FBGCs).

It is found in the membrane. In terms of biological role, probable cell surface receptor that plays a role in cellular fusion and cell differentiation. Cooperates with DCSTAMP in modulating cell-cell fusion in both osteoclasts and foreign body giant cells (FBGCs). Involved in osteoclast bone resorption. Promotes osteoclast differentiation and may play a role in the multinucleated osteoclast maturation. This Mus musculus (Mouse) protein is Osteoclast stimulatory transmembrane protein (Ocstamp).